A 290-amino-acid chain; its full sequence is Shikimate dehydrogenase (NADP(+)) (290 aa).

Shikimate is bound by residues 18–20 (SYS) and T66. Residue K70 is the Proton acceptor of the active site. Shikimate is bound by residues N91 and D106. Residues 130–134 (GNGGA) and M230 contribute to the NADP(+) site. Y232 contacts shikimate. An NADP(+)-binding site is contributed by G253.

Belongs to the shikimate dehydrogenase family. In terms of assembly, homodimer.

It catalyses the reaction shikimate + NADP(+) = 3-dehydroshikimate + NADPH + H(+). Its pathway is metabolic intermediate biosynthesis; chorismate biosynthesis; chorismate from D-erythrose 4-phosphate and phosphoenolpyruvate: step 4/7. Functionally, involved in the biosynthesis of the chorismate, which leads to the biosynthesis of aromatic amino acids. Catalyzes the reversible NADPH linked reduction of 3-dehydroshikimate (DHSA) to yield shikimate (SA). The chain is Shikimate dehydrogenase (NADP(+)) from Prosthecochloris aestuarii (strain DSM 271 / SK 413).